Reading from the N-terminus, the 44-residue chain is Mu-conotoxin-like Cal 12.1.2f (44 aa).

Disulfide bonds link C3/C15, C10/C27, C17/C32, and C26/C38. Position 16 is a 6'-bromotryptophan (W16). P22 is modified (4-hydroxyproline). 6'-bromotryptophan is present on residues W36 and W37. P39 is subject to 4-hydroxyproline. W43 is subject to 6'-bromotryptophan.

In terms of tissue distribution, expressed by the venom duct.

The protein resides in the secreted. Its function is as follows. Mu-conotoxins block voltage-gated sodium channels. This toxin reversibly blocks voltage-gated sodium channel in cephalopods, with no alteration in the voltage dependence of sodium conductance or on the kinetics of inactivation. The polypeptide is Mu-conotoxin-like Cal 12.1.2f (Californiconus californicus (California cone)).